The primary structure comprises 1035 residues: Cell-division control histidine kinase PdhS (1035 aa).

Residues 1–613 (MSGSYPFIDI…HADGSEEPVD (613 aa)) form an important for polar localization region. Residues 500-533 (QGLANTRAESETPVSETSSIEPVEPTPPVKTRSE) form a disordered region. Residues 614–1035 (AHLNAIAWRG…VFPPTRVLAD (422 aa)) form an interaction with DivK region. Residues 659 to 730 (HVEELKTILD…YLHGLSGNGV (72 aa)) enclose the PAS domain. Residues 802 to 1031 (RISHEIRTPL…VVEIVFPPTR (230 aa)) enclose the Histidine kinase domain. His-805 bears the Phosphohistidine; by autocatalysis mark.

In terms of assembly, interacts with DivK.

The protein resides in the cytoplasm. The catalysed reaction is ATP + protein L-histidine = ADP + protein N-phospho-L-histidine.. Functionally, functions as a polar differentiation marker. Essential protein that, by localizing in the old pole of dividing cells, controls cell division and maturation, probably through control of DivK phosphorylation status and cellular distribution, which in turn regulates CtrA, a transcriptional regulator of the minB operon. The asymmetrical localization of this protein is probably required for cells to enter a new division cycle. In Brucella canis (strain ATCC 23365 / NCTC 10854 / RM-666), this protein is Cell-division control histidine kinase PdhS (pdhS).